The primary structure comprises 282 residues: Heme oxygenase 1, chloroplastic (282 aa).

Residues 1–54 (MAYLAPISSSLSIFKNPQLSRFQFSSSSPNPLFLRPRIQILSMTMNKSPSLVVV) constitute a chloroplast transit peptide. Histidine 86 contacts heme b.

This sequence belongs to the heme oxygenase family. Widely expressed.

The protein resides in the plastid. It localises to the chloroplast. The enzyme catalyses heme b + 3 reduced [NADPH--hemoprotein reductase] + 3 O2 = biliverdin IXalpha + CO + Fe(2+) + 3 oxidized [NADPH--hemoprotein reductase] + 3 H2O + H(+). Activated by ascorbate. Its function is as follows. Key enzyme in the synthesis of the chromophore of the phytochrome family of plant photoreceptors. Catalyzes the opening of the heme ring to form the open-chain tetrapyrrole biliverdin IX with the release of iron and carbon monoxide (CO). Produces specifically the biliverdin IX-alpha isomer. Can form complex with heme, is ferredoxin-dependent and its activity is increased in the presence of ascorbate. Plays a role in salt acclimation signaling. May affect the plastid-to-nucleus signaling pathway by perturbing tetrapyrrole synthesis. The plastid-to-nucleus signal plays an important role in the coordinated expression of both nuclear- and chloroplast-localized genes that encode photosynthesis-related proteins. The protein is Heme oxygenase 1, chloroplastic (HO1) of Arabidopsis thaliana (Mouse-ear cress).